The sequence spans 90 residues: uncharacterized protein (90 aa).

It localises to the cytoplasm. This is an uncharacterized protein from Saccharomyces cerevisiae (strain ATCC 204508 / S288c) (Baker's yeast).